The chain runs to 141 residues: Nucleoside diphosphate kinase (141 aa).

6 residues coordinate ATP: K11, F59, R87, T93, R104, and N114. H117 acts as the Pros-phosphohistidine intermediate in catalysis.

Belongs to the NDK family. Homotetramer. The cofactor is Mg(2+).

Its subcellular location is the cytoplasm. The catalysed reaction is a 2'-deoxyribonucleoside 5'-diphosphate + ATP = a 2'-deoxyribonucleoside 5'-triphosphate + ADP. It carries out the reaction a ribonucleoside 5'-diphosphate + ATP = a ribonucleoside 5'-triphosphate + ADP. Major role in the synthesis of nucleoside triphosphates other than ATP. The ATP gamma phosphate is transferred to the NDP beta phosphate via a ping-pong mechanism, using a phosphorylated active-site intermediate. This is Nucleoside diphosphate kinase from Chromobacterium violaceum (strain ATCC 12472 / DSM 30191 / JCM 1249 / CCUG 213 / NBRC 12614 / NCIMB 9131 / NCTC 9757 / MK).